The chain runs to 485 residues: Aspartyl/glutamyl-tRNA(Asn/Gln) amidotransferase subunit B (485 aa).

This sequence belongs to the GatB/GatE family. GatB subfamily. Heterotrimer of A, B and C subunits.

The enzyme catalyses L-glutamyl-tRNA(Gln) + L-glutamine + ATP + H2O = L-glutaminyl-tRNA(Gln) + L-glutamate + ADP + phosphate + H(+). It carries out the reaction L-aspartyl-tRNA(Asn) + L-glutamine + ATP + H2O = L-asparaginyl-tRNA(Asn) + L-glutamate + ADP + phosphate + 2 H(+). Allows the formation of correctly charged Asn-tRNA(Asn) or Gln-tRNA(Gln) through the transamidation of misacylated Asp-tRNA(Asn) or Glu-tRNA(Gln) in organisms which lack either or both of asparaginyl-tRNA or glutaminyl-tRNA synthetases. The reaction takes place in the presence of glutamine and ATP through an activated phospho-Asp-tRNA(Asn) or phospho-Glu-tRNA(Gln). This Ruminiclostridium cellulolyticum (strain ATCC 35319 / DSM 5812 / JCM 6584 / H10) (Clostridium cellulolyticum) protein is Aspartyl/glutamyl-tRNA(Asn/Gln) amidotransferase subunit B.